Consider the following 412-residue polypeptide: Proline-rich protein 30 (412 aa).

The span at 33–45 (HNLQPLSAHQSLR) shows a compositional bias: polar residues. Disordered regions lie at residues 33–75 (HNLQ…QFGS), 123–174 (PLTP…SNRQ), and 318–412 (PKEV…KSSV). Low complexity-rich tracts occupy residues 126-142 (PSFSPSQPQNSSLPHSP) and 334-350 (PSPAFQPPAAQARADPA). The span at 353–372 (TPSQTRSFRSAGLQSPNSPR) shows a compositional bias: polar residues.

The polypeptide is Proline-rich protein 30 (PRR30) (Macaca fascicularis (Crab-eating macaque)).